Reading from the N-terminus, the 262-residue chain is Probable carboxylesterase SOBER1-like (262 aa).

Residues S151, D205, and H237 each act as charge relay system in the active site.

It belongs to the AB hydrolase superfamily. AB hydrolase 2 family.

Carboxylesterase. The sequence is that of Probable carboxylesterase SOBER1-like from Arabidopsis thaliana (Mouse-ear cress).